Consider the following 149-residue polypeptide: MSNQVTKSDNSEPLAPAGEPAIRVIAMPANTNADGRMFGGWLMGMLDQAAGLVAARHALARVVTVAADSITFHAPVQVGDELSLYARLVKVGRTSMKIEVEGWRRVRHELETIKAISGLFTFVAIDEDRRPCQVPPMNETRLLSDKADK.

The region spanning 16–128 (PAGEPAIRVI…LFTFVAIDED (113 aa)) is the HotDog ACOT-type domain.

The protein belongs to the acyl coenzyme A hydrolase family.

This is an uncharacterized protein from Zymomonas mobilis subsp. mobilis (strain ATCC 31821 / ZM4 / CP4).